Consider the following 173-residue polypeptide: CASP-like protein 2D1 (173 aa).

Residues 1–9 (MAPLLKLLD) are Cytoplasmic-facing. Residues 10–29 (SSLRVSVIPLSAATIWLTVT) traverse the membrane as a helical segment. Over 30 to 50 (NHQDNSSYGNLKYSNIMGLKY) the chain is Extracellular. Residue N34 is glycosylated (N-linked (GlcNAc...) asparagine). Residues 51 to 71 (MVCISAICASYAFVAAVSIWI) form a helical membrane-spanning segment. The Cytoplasmic segment spans residues 72–86 (KCLVNKVWLFFVSDQ). A helical transmembrane segment spans residues 87 to 107 (IIAYLMVTSVAAAMEILYIAY). Residues 108–131 (NGDQKVTWSEACTSYGKFCNGMKT) are Extracellular-facing. The helical transmembrane segment at 132–152 (ALILHALTLCFFIVLAVISAY) threads the bilayer. Topologically, residues 153–173 (RAFSMYQPPVSSKETVEGDAT) are cytoplasmic.

The protein belongs to the Casparian strip membrane proteins (CASP) family. In terms of assembly, homodimer and heterodimers.

Its subcellular location is the cell membrane. This chain is CASP-like protein 2D1, found in Ricinus communis (Castor bean).